The sequence spans 382 residues: Galactokinase (382 aa).

Glutamate 34–aspartate 37 lines the substrate pocket. Glycine 124–serine 130 provides a ligand contact to ATP. The Mg(2+) site is built by serine 130 and glutamate 162. Aspartate 174 serves as the catalytic Proton acceptor. Substrate is bound at residue tyrosine 223.

It belongs to the GHMP kinase family. GalK subfamily.

It is found in the cytoplasm. The catalysed reaction is alpha-D-galactose + ATP = alpha-D-galactose 1-phosphate + ADP + H(+). It participates in carbohydrate metabolism; galactose metabolism. Its function is as follows. Catalyzes the transfer of the gamma-phosphate of ATP to D-galactose to form alpha-D-galactose-1-phosphate (Gal-1-P). The chain is Galactokinase from Escherichia coli O7:K1 (strain IAI39 / ExPEC).